Reading from the N-terminus, the 183-residue chain is Thioredoxin-like protein CITRX, chloroplastic (183 aa).

Residues 1–81 (MALVQSRTFP…REDYLVKKLS (81 aa)) constitute a chloroplast transit peptide. In terms of domain architecture, Thioredoxin spans 82 to 183 (AQELQELVKG…MMHDIIDNEM (102 aa)). Catalysis depends on nucleophile residues Cys-106 and Cys-109. The cysteines at positions 106 and 109 are disulfide-linked.

Belongs to the thioredoxin family. Plant CITRX-type subfamily. In terms of assembly, interacts with FLN1 and FLN2. Interacts with MRL7.

It is found in the plastid. The protein resides in the chloroplast. Its function is as follows. Thiol-disulfide oxidoreductase that plays a role in proper chloroplast development, most likely through regulating plastid-encoded polymerase (PEP) dependent chloroplast transcription. Acts as a component of the transcriptionally active plastid chromosome that is required for plastid gene expression. This chain is Thioredoxin-like protein CITRX, chloroplastic, found in Arabidopsis thaliana (Mouse-ear cress).